We begin with the raw amino-acid sequence, 52 residues long: Conotoxin Cal6.36 (52 aa).

Positions 1 to 22 (MKVTCVLTLAVLILTVGQMVTA) are cleaved as a signal peptide. 3 cysteine pairs are disulfide-bonded: C24-C39, C31-C43, and C38-C47.

In terms of tissue distribution, expressed by the venom duct.

It localises to the secreted. Probable neurotoxin. This Californiconus californicus (California cone) protein is Conotoxin Cal6.36.